Consider the following 149-residue polypeptide: Large ribosomal subunit protein uL15 (149 aa).

Positions 1-58 are disordered; sequence MKLHNLRPAKGGEVKARKRVGRGYGSGLGHNAGRGRDGQNSRSGGGVRPGFEGGQMPL. 2 stretches are compositionally biased toward gly residues: residues 22-32 and 43-53; these read RGYGSGLGHNA and SGGGVRPGFEG.

It belongs to the universal ribosomal protein uL15 family. As to quaternary structure, part of the 50S ribosomal subunit.

Its function is as follows. Binds to the 23S rRNA. The polypeptide is Large ribosomal subunit protein uL15 (Finegoldia magna (strain ATCC 29328 / DSM 20472 / WAL 2508) (Peptostreptococcus magnus)).